The primary structure comprises 541 residues: MAKTIAYDEEARRGLERGLNSLADAVKVTLGPKGRNVVLEKKWGAPTITNDGVSIAKEIELEDPYEKIGAELVKEVAKKTDDVAGDGTTTATVLAQALVREGLRNVAAGANPLGLKRGIEKAVEAVTAKLLDTAKEVETKEQIAATAGISAGDASIGELIAEAMDKVGKEGVITVEESNTFGLQLELTEGMRFDKGYISGYFVTDPERQEAVLEDPYILLVGSKVSTVKDLLPLLEKVIQAGKPLLIIAEDVEGEALSTLVVNKIRGTFKSVAVKAPGFGDRRKAQLADIAILTGGEVISEEVGLSLETAGIELLGQARKVVVTKDETTIVEGAGDAEAIKGRVAQIRTEIENSDSDYDREKLQERLAKLAGGVAVIKAGAATEVELKERKHRIEDAVRNAKAAVEEGIVAGGGVALLQAAPALDELKLTGDEATGANIVRVALSAPLKQIAFNAGLEPGVVAEKVSNLEAGHGLNADSGEYEDLLAAGVADPVKVTRSALQNAASIAALFLTTEAVVADKPEKAAAPAGDPTGGMGGMDF.

ATP is bound by residues 29–32 (TLGP), 86–90 (DGTTT), Gly413, and Asp492.

Belongs to the chaperonin (HSP60) family. Forms a cylinder of 14 subunits composed of two heptameric rings stacked back-to-back. Interacts with the co-chaperonin GroES.

It is found in the cytoplasm. It catalyses the reaction ATP + H2O + a folded polypeptide = ADP + phosphate + an unfolded polypeptide.. In terms of biological role, together with its co-chaperonin GroES, plays an essential role in assisting protein folding. The GroEL-GroES system forms a nano-cage that allows encapsulation of the non-native substrate proteins and provides a physical environment optimized to promote and accelerate protein folding. In Nocardia farcinica (strain IFM 10152), this protein is Chaperonin GroEL 2.